A 387-amino-acid polypeptide reads, in one-letter code: GTP-binding protein 10 (387 aa).

Residues 13 to 148 (GNFIDNLRLF…RVIHLDLKLI (136 aa)) form the Obg domain. The OBG-type G domain occupies 149–344 (ADIGLVGFPN…LKNCIRKSLD (196 aa)). GTP-binding positions include 155–162 (GFPNAGKS), 202–206 (DLPGL), and 278–281 (NKMD).

It belongs to the TRAFAC class OBG-HflX-like GTPase superfamily. OBG GTPase family.

It localises to the nucleus. The protein resides in the nucleolus. Functionally, may be involved in the ribosome maturation process. This chain is GTP-binding protein 10 (GTPBP10), found in Bos taurus (Bovine).